Consider the following 501-residue polypeptide: Acyl-CoA-binding domain-containing protein 5A (501 aa).

Positions 9-98 (YEQRFNAAVK…LKLILESMPV (90 aa)) constitute an ACB domain. Residues 20 to 29 (IQNLPPNGSF), 40 to 44 (YSYYK), Lys-66, and Tyr-85 each bind an acyl-CoA. Residues 173–405 (IDLEDREDDD…GERWGADGPM (233 aa)) are disordered. The span at 176–195 (EDREDDDDEDEEGERDEVEE) shows a compositional bias: acidic residues. Residues 219 to 235 (SNGSISQHKGLSNGTHG) are compositionally biased toward polar residues. Basic and acidic residues-rich tracts occupy residues 236 to 254 (SKSD…HMNH), 266 to 283 (NSEK…HVAS), and 328 to 366 (RSQD…KRSD). Residues 376-389 (SRSPASGSGSAGPQ) show a composition bias toward low complexity. Positions 406-437 (TENLNEQIICALARLQDDMQSVLQRLHTLEAL) form a coiled coil. A helical membrane pass occupies residues 465 to 485 (WWPFDVSLGTVAFAVVWPFVV).

This sequence belongs to the ATG37 family.

It is found in the membrane. Functionally, acyl-CoA binding protein which acts as the peroxisome receptor for pexophagy but is dispensable for aggrephagy and nonselective autophagy. Binds medium- and long-chain acyl-CoA esters. In Danio rerio (Zebrafish), this protein is Acyl-CoA-binding domain-containing protein 5A (acbd5a).